Consider the following 271-residue polypeptide: Inactive phospholipid phosphatase 7 (271 aa).

The disordered stretch occupies residues 1–66; it reads MPASQSRARA…RERRQSQQLP (66 aa). Residues 1 to 112 are Cytoplasmic-facing; that stretch reads MPASQSRARA…AASWASARSM (112 aa). Phosphoserine is present on residues Ser-43 and Ser-62. The segment at 70–91 is interaction with MTOR; that stretch reads CMQLNPSFKGIAFNSLLAIDIC. The chain crosses the membrane as a helical span at residues 113-133; it reads VKLIGITGHGIPWIGGTILCL. The Extracellular portion of the chain corresponds to 134–141; sequence VKSSTLAG. Residues 142-162 traverse the membrane as a helical segment; sequence QEVLMNLLLALLLDIMTVAGV. The Cytoplasmic segment spans residues 163–202; the sequence is QKLIKRRGPYETSPSLLDYLTMDIYAFPAGHASRAAMVSK. The helical transmembrane segment at 203-223 threads the bilayer; that stretch reads FFLSHLVLAVPLRVLLVLWAL. Residues 224-239 lie on the Extracellular side of the membrane; the sequence is CVGLSRVMIGRHHVTD. The chain crosses the membrane as a helical span at residues 240–260; sequence VLSGFVIGYLQFRLVELVWMP. The Cytoplasmic portion of the chain corresponds to 261–271; that stretch reads SSTCQMLISAW.

It belongs to the PA-phosphatase related phosphoesterase family. As to quaternary structure, homo and heterooligomer. Interacts with MTOR; controls MTOR-dependent IGF2 expression during myoblast differentiation.

It localises to the nucleus envelope. The protein localises to the endoplasmic reticulum membrane. The protein resides in the membrane. Its function is as follows. Plays a role as negative regulator of myoblast differentiation, in part through effects on MTOR signaling. Has no detectable enzymatic activity. This chain is Inactive phospholipid phosphatase 7, found in Homo sapiens (Human).